Reading from the N-terminus, the 117-residue chain is Holo-[acyl-carrier-protein] synthase (117 aa).

Mg(2+) contacts are provided by aspartate 6 and glutamate 55.

It belongs to the P-Pant transferase superfamily. AcpS family. Mg(2+) serves as cofactor.

Its subcellular location is the cytoplasm. The enzyme catalyses apo-[ACP] + CoA = holo-[ACP] + adenosine 3',5'-bisphosphate + H(+). Its function is as follows. Transfers the 4'-phosphopantetheine moiety from coenzyme A to a Ser of acyl-carrier-protein. The protein is Holo-[acyl-carrier-protein] synthase of Chlorobaculum parvum (strain DSM 263 / NCIMB 8327) (Chlorobium vibrioforme subsp. thiosulfatophilum).